A 424-amino-acid polypeptide reads, in one-letter code: 3-ketoacyl-CoA thiolase B, peroxisomal (424 aa).

Residues 1–26 (MHRLQVVLGHLAGRPESSSALQAAPC) constitute a peroxisome transit peptide. The segment at 1-26 (MHRLQVVLGHLAGRPESSSALQAAPC) is PTS2-type peroxisomal targeting signal. Residue Cys-123 is the Acyl-thioester intermediate of the active site. Lys-173 and Lys-234 each carry N6-acetyllysine. Positions 249, 252, and 276 each coordinate CoA. Catalysis depends on Cys-408, which acts as the Proton donor/acceptor.

This sequence belongs to the thiolase-like superfamily. Thiolase family. Homodimer. Interacts (via PTS2-type peroxisomal targeting signal region) with PEX7; leading to its translocation into peroxisomes. Mainly expressed in liver; weaker levels in kidney, intestine and white adipose tissue.

The protein resides in the peroxisome. The catalysed reaction is an acyl-CoA + acetyl-CoA = a 3-oxoacyl-CoA + CoA. The enzyme catalyses 2 acetyl-CoA = acetoacetyl-CoA + CoA. It catalyses the reaction hexanoyl-CoA + acetyl-CoA = 3-oxooctanoyl-CoA + CoA. It carries out the reaction tetradecanoyl-CoA + acetyl-CoA = 3-oxohexadecanoyl-CoA + CoA. The catalysed reaction is 3-oxohexadecanedioyl-CoA + CoA = tetradecanedioyl-CoA + acetyl-CoA. The enzyme catalyses 3-oxo-(6Z,9Z,12Z,15Z,18Z,21Z)-tetracosahexaenoyl-CoA + CoA = (4Z,7Z,10Z,13Z,16Z,19Z)-docosahexaenoyl-CoA + acetyl-CoA. It functions in the pathway lipid metabolism; peroxisomal fatty acid beta-oxidation. Responsible for the thiolytic cleavage of straight chain 3-keto fatty acyl-CoAs (3-oxoacyl-CoAs). Plays an important role in fatty acid peroxisomal beta-oxidation. Catalyzes the cleavage of short, medium, long, and very long straight chain 3-oxoacyl-CoAs. The polypeptide is 3-ketoacyl-CoA thiolase B, peroxisomal (Mus musculus (Mouse)).